Consider the following 107-residue polypeptide: Thiosulfate sulfurtransferase GlpE (107 aa).

In terms of domain architecture, Rhodanese spans Ala-17 to Pro-101. Cys-65 serves as the catalytic Cysteine persulfide intermediate.

Belongs to the GlpE family.

Its subcellular location is the cytoplasm. The catalysed reaction is thiosulfate + hydrogen cyanide = thiocyanate + sulfite + 2 H(+). It catalyses the reaction thiosulfate + [thioredoxin]-dithiol = [thioredoxin]-disulfide + hydrogen sulfide + sulfite + 2 H(+). Transferase that catalyzes the transfer of sulfur from thiosulfate to thiophilic acceptors such as cyanide or dithiols. May function in a CysM-independent thiosulfate assimilation pathway by catalyzing the conversion of thiosulfate to sulfite, which can then be used for L-cysteine biosynthesis. This is Thiosulfate sulfurtransferase GlpE from Aeromonas hydrophila subsp. hydrophila (strain ATCC 7966 / DSM 30187 / BCRC 13018 / CCUG 14551 / JCM 1027 / KCTC 2358 / NCIMB 9240 / NCTC 8049).